Here is a 321-residue protein sequence, read N- to C-terminus: MGCVSSKSTTVLSPQTSFNEASRTSFRALPGPSQRQLEVYDQCLIGAARWPDDSSKSNTPENRAYCQSMYNSIRSAGDEISRGGITSFEELWGRATEWRLSKLQRGEPLYSAFASERTSDTDAVTPLVKPYKSVLARVVDHEDAHDEIMQDNLFGDLNVKVYRQTAYLHGNVIPLNTFRVATDTEYLRDRVAHLRTELGAKALKQHLQRYNPDRIDHTNASYLPIIKDHLNDLYRQAISSDLSQAELISLIARTHWWAASAMPDQRGSAAKAEFAARAIASAHGIELPPFRNGNVSDIEAMLSGEEEFVEKYRSLLDSDCF.

To avirulence C protein of the same strain.

It localises to the secreted. The polypeptide is Avirulence protein B (avrB) (Pseudomonas savastanoi pv. glycinea (Pseudomonas syringae pv. glycinea)).